Consider the following 569-residue polypeptide: 3-(3-hydroxy-phenyl)propionate/3-hydroxycinnamic acid hydroxylase (569 aa).

FAD-binding positions include 12–41 (DVVV…VVDE) and 277–287 (FRKGRLMLAGD).

The protein belongs to the PheA/TfdB FAD monooxygenase family. It depends on FAD as a cofactor.

It carries out the reaction 3-(3-hydroxyphenyl)propanoate + NADH + O2 + H(+) = 3-(2,3-dihydroxyphenyl)propanoate + NAD(+) + H2O. The enzyme catalyses (2E)-3-(3-hydroxyphenyl)prop-2-enoate + NADH + O2 + H(+) = (2E)-3-(2,3-dihydroxyphenyl)prop-2-enoate + NAD(+) + H2O. Its pathway is aromatic compound metabolism; 3-phenylpropanoate degradation. In terms of biological role, catalyzes the insertion of one atom of molecular oxygen into position 2 of the phenyl ring of 3-(3-hydroxyphenyl)propionate (3-HPP) and hydroxycinnamic acid (3HCI). In Mycolicibacterium vanbaalenii (strain DSM 7251 / JCM 13017 / BCRC 16820 / KCTC 9966 / NRRL B-24157 / PYR-1) (Mycobacterium vanbaalenii), this protein is 3-(3-hydroxy-phenyl)propionate/3-hydroxycinnamic acid hydroxylase.